Consider the following 309-residue polypeptide: Carbamate kinase-like protein (309 aa).

The tract at residues 125-144 (NKPVGPFYNTEETARSANPN) is disordered.

This sequence belongs to the carbamate kinase family.

This chain is Carbamate kinase-like protein, found in Mycoplasma pneumoniae (strain ATCC 29342 / M129 / Subtype 1) (Mycoplasmoides pneumoniae).